Reading from the N-terminus, the 576-residue chain is Interleukin-1 receptor type 1 (576 aa).

The signal sequence occupies residues 1 to 19; sequence MENMKVLLGFICLIVPLLS. Ig-like C2-type domains are found at residues 20 to 115, 121 to 217, and 229 to 331; these read LETD…ITMS, PGLC…RVIT, and PVIM…VRLV. Over 20–338 the chain is Extracellular; that stretch reads LETDKCTEYP…RLVYPVPDFK (319 aa). Disulfide bonds link Cys25–Cys107, Cys46–Cys99, and Cys145–Cys199. N-linked (GlcNAc...) asparagine glycans are attached at residues Asn63 and Asn103. Residues Asn236, Asn252, and Asn266 are each glycosylated (N-linked (GlcNAc...) asparagine). A disulfide bond links Cys251 and Cys315. The chain crosses the membrane as a helical span at residues 339–359; the sequence is NYLIGGFAIFTATAVFCACIY. At 360–576 the chain is on the cytoplasmic side; it reads KVFKVDIVLW…LQAETHLPLG (217 aa). Positions 386–541 constitute a TIR domain; that stretch reads RTYDAYVLYP…RFWKNLRYQM (156 aa). The active site involves Glu473. Tyr499 carries the phosphotyrosine modification. Thr556 is modified (phosphothreonine; by PKC).

It belongs to the interleukin-1 receptor family. As to quaternary structure, the interleukin-1 receptor complex is a heterodimer of IL1R1 and IL1RAP. Interacts with PIK3R1. Interacts with IL1A. Post-translationally, a soluble form (sIL1R1) is probably produced by proteolytic cleavage at the cell surface (shedding). Rapidly phosphorylated on Tyr-499 in response to IL-1, which creates a SH2 binding site for the PI 3-kinase regulatory subunit PIK3R1.

The protein resides in the membrane. The protein localises to the cell membrane. It is found in the secreted. It catalyses the reaction NAD(+) + H2O = ADP-D-ribose + nicotinamide + H(+). Receptor for IL1A, IL1B and IL1RN. After binding to interleukin-1 associates with the coreceptor IL1RAP to form the high affinity interleukin-1 receptor complex which mediates interleukin-1-dependent activation of NF-kappa-B, MAPK and other pathways. Signaling involves the recruitment of adapter molecules such as TOLLIP, MYD88, and IRAK1 or IRAK2 via the respective TIR domains of the receptor/coreceptor subunits. Binds ligands with comparable affinity and binding of antagonist IL1RN prevents association with IL1RAP to form a signaling complex. Involved in IL1B-mediated costimulation of IFNG production from T-helper 1 (Th1) cells. This chain is Interleukin-1 receptor type 1 (Il1r1), found in Rattus norvegicus (Rat).